The primary structure comprises 295 residues: Protoheme IX farnesyltransferase 2 (295 aa).

The next 9 membrane-spanning stretches (helical) occupy residues 9–29, 36–56, 83–103, 108–128, 135–155, 163–183, 209–229, 230–250, and 264–284; these read ITKP…FFLA, FALF…GCVF, LPLA…LLYV, LSAF…SLWL, GTLV…CAVS, VTLL…IAIF, IVLY…GGYA, GLGY…MAWG, and VFGF…VDSQ.

This sequence belongs to the UbiA prenyltransferase family. Protoheme IX farnesyltransferase subfamily.

It is found in the cell inner membrane. The enzyme catalyses heme b + (2E,6E)-farnesyl diphosphate + H2O = Fe(II)-heme o + diphosphate. The protein operates within porphyrin-containing compound metabolism; heme O biosynthesis; heme O from protoheme: step 1/1. In terms of biological role, converts heme B (protoheme IX) to heme O by substitution of the vinyl group on carbon 2 of heme B porphyrin ring with a hydroxyethyl farnesyl side group. The polypeptide is Protoheme IX farnesyltransferase 2 (Pseudomonas putida (strain ATCC 47054 / DSM 6125 / CFBP 8728 / NCIMB 11950 / KT2440)).